We begin with the raw amino-acid sequence, 177 residues long: ATP synthase subunit delta (177 aa).

It belongs to the ATPase delta chain family. In terms of assembly, F-type ATPases have 2 components, F(1) - the catalytic core - and F(0) - the membrane proton channel. F(1) has five subunits: alpha(3), beta(3), gamma(1), delta(1), epsilon(1). F(0) has three main subunits: a(1), b(2) and c(10-14). The alpha and beta chains form an alternating ring which encloses part of the gamma chain. F(1) is attached to F(0) by a central stalk formed by the gamma and epsilon chains, while a peripheral stalk is formed by the delta and b chains.

The protein resides in the cell inner membrane. Its function is as follows. F(1)F(0) ATP synthase produces ATP from ADP in the presence of a proton or sodium gradient. F-type ATPases consist of two structural domains, F(1) containing the extramembraneous catalytic core and F(0) containing the membrane proton channel, linked together by a central stalk and a peripheral stalk. During catalysis, ATP synthesis in the catalytic domain of F(1) is coupled via a rotary mechanism of the central stalk subunits to proton translocation. Functionally, this protein is part of the stalk that links CF(0) to CF(1). It either transmits conformational changes from CF(0) to CF(1) or is implicated in proton conduction. In Shewanella putrefaciens (strain CN-32 / ATCC BAA-453), this protein is ATP synthase subunit delta.